Here is a 208-residue protein sequence, read N- to C-terminus: Imidazoleglycerol-phosphate dehydratase (208 aa).

Belongs to the imidazoleglycerol-phosphate dehydratase family.

It localises to the cytoplasm. It catalyses the reaction D-erythro-1-(imidazol-4-yl)glycerol 3-phosphate = 3-(imidazol-4-yl)-2-oxopropyl phosphate + H2O. It participates in amino-acid biosynthesis; L-histidine biosynthesis; L-histidine from 5-phospho-alpha-D-ribose 1-diphosphate: step 6/9. The protein is Imidazoleglycerol-phosphate dehydratase of Paenarthrobacter aurescens (strain TC1).